The primary structure comprises 42 residues: Large ribosomal subunit protein eL32 (42 aa).

The protein belongs to the eukaryotic ribosomal protein eL32 family.

The chain is Large ribosomal subunit protein eL32 (RPL32) from Zea mays (Maize).